Reading from the N-terminus, the 188-residue chain is UPF0398 protein SSP1297 (188 aa).

The protein belongs to the UPF0398 family.

The protein is UPF0398 protein SSP1297 of Staphylococcus saprophyticus subsp. saprophyticus (strain ATCC 15305 / DSM 20229 / NCIMB 8711 / NCTC 7292 / S-41).